A 202-amino-acid chain; its full sequence is tRNA (guanine-N(7)-)-methyltransferase (202 aa).

S-adenosyl-L-methionine-binding residues include E34, E59, D86, and D107. D107 is an active-site residue. Substrate is bound by residues K111, D143, and 181-184 (TDYE).

This sequence belongs to the class I-like SAM-binding methyltransferase superfamily. TrmB family.

The catalysed reaction is guanosine(46) in tRNA + S-adenosyl-L-methionine = N(7)-methylguanosine(46) in tRNA + S-adenosyl-L-homocysteine. Its pathway is tRNA modification; N(7)-methylguanine-tRNA biosynthesis. Functionally, catalyzes the formation of N(7)-methylguanine at position 46 (m7G46) in tRNA. This chain is tRNA (guanine-N(7)-)-methyltransferase, found in Metamycoplasma hominis (strain ATCC 23114 / DSM 25592 / NBRC 14850 / NCTC 10111 / PG21) (Mycoplasma hominis).